Reading from the N-terminus, the 297-residue chain is Aspartate carbamoyltransferase catalytic subunit (297 aa).

The carbamoyl phosphate site is built by Arg49 and Thr50. Residue Lys77 coordinates L-aspartate. Residues Arg99, His129, and Gln132 each coordinate carbamoyl phosphate. Residues Arg162 and Arg215 each coordinate L-aspartate. Gly256 and Pro257 together coordinate carbamoyl phosphate.

This sequence belongs to the aspartate/ornithine carbamoyltransferase superfamily. ATCase family. In terms of assembly, heterododecamer (2C3:3R2) of six catalytic PyrB chains organized as two trimers (C3), and six regulatory PyrI chains organized as three dimers (R2).

The enzyme catalyses carbamoyl phosphate + L-aspartate = N-carbamoyl-L-aspartate + phosphate + H(+). Its pathway is pyrimidine metabolism; UMP biosynthesis via de novo pathway; (S)-dihydroorotate from bicarbonate: step 2/3. In terms of biological role, catalyzes the condensation of carbamoyl phosphate and aspartate to form carbamoyl aspartate and inorganic phosphate, the committed step in the de novo pyrimidine nucleotide biosynthesis pathway. The polypeptide is Aspartate carbamoyltransferase catalytic subunit (Legionella pneumophila subsp. pneumophila (strain Philadelphia 1 / ATCC 33152 / DSM 7513)).